Consider the following 207-residue polypeptide: Coiled-coil domain-containing protein 124 homolog (207 aa).

Residues 1–90 form a disordered region; the sequence is MGNPKKRAEK…KAAKKNSSLD (90 aa). Residues 5–71 are a coiled coil; sequence KKRAEKAEAA…RLEKEEMESL (67 aa). Composition is skewed to basic and acidic residues over residues 9 to 28 and 41 to 65; these read EKAE…KKDA and NKKE…RLEK.

Belongs to the CCDC124 family. Associates with translationally inactive ribosomes in the nonrotated state.

It is found in the cytoplasm. The protein localises to the nucleus. In terms of biological role, ribosome-binding protein involved in ribosome hibernation by associating with translationally inactive ribosomes. Required for translational recovery after starvation from stationary phase. May facilitate rapid translation reactivation by stabilizing the recycling-competent state of inactive ribosomes. The chain is Coiled-coil domain-containing protein 124 homolog from Schizosaccharomyces pombe (strain 972 / ATCC 24843) (Fission yeast).